The chain runs to 122 residues: Large ribosomal subunit protein uL18 (122 aa).

A compositionally biased stretch (basic and acidic residues) spans 1–11 (MLKKPDRNALR). The disordered stretch occupies residues 1 to 22 (MLKKPDRNALRDKRRRRVRKKI). A compositionally biased stretch (basic residues) spans 12–22 (DKRRRRVRKKI).

This sequence belongs to the universal ribosomal protein uL18 family. As to quaternary structure, part of the 50S ribosomal subunit; part of the 5S rRNA/L5/L18/L25 subcomplex. Contacts the 5S and 23S rRNAs.

Functionally, this is one of the proteins that bind and probably mediate the attachment of the 5S RNA into the large ribosomal subunit, where it forms part of the central protuberance. The protein is Large ribosomal subunit protein uL18 of Pelotomaculum thermopropionicum (strain DSM 13744 / JCM 10971 / SI).